A 793-amino-acid polypeptide reads, in one-letter code: Meiosis-specific protein ASY3 (793 aa).

Disordered stretches follow at residues 1–40 (MSDY…DKDD), 58–97 (LQAN…RKLG), 110–287 (LSGS…KAGA), and 305–586 (EGLR…KRNS). Residues 7–19 (FGSNYHPSSQSRK) are compositionally biased toward polar residues. Positions 60 to 70 (ANKKEKSDLAA) are enriched in basic and acidic residues. A compositionally biased stretch (polar residues) spans 72-86 (QRNSAQVTGHVTSPW). Low complexity predominate over residues 110-122 (LSGSKGLNKGLNG). Polar residues predominate over residues 131–142 (SFQNCPISSPQH). Composition is skewed to basic and acidic residues over residues 151 to 165 (RNDR…RMEE) and 177 to 187 (SQREKMDKPGK). A compositionally biased stretch (polar residues) spans 209-219 (PANNEDVNSET). Positions 221–248 (EVEKTNFKLSQDKGSNDDPLIKPRHNSD) are enriched in basic and acidic residues. The span at 322–341 (KKQRGRRKNTVVKCRKAHSR) shows a compositional bias: basic residues. 4 stretches are compositionally biased toward basic and acidic residues: residues 342–354 (KKDE…KEAS), 363–385 (ESTE…DLHP), 392–407 (QKPD…HPSP), and 424–441 (NGDK…KSVE). Composition is skewed to low complexity over residues 455-470 (APIS…EASP) and 491-502 (GTKKTSQGTTGQ). Basic and acidic residues-rich tracts occupy residues 505–527 (DTEK…RESS) and 541–553 (SDER…REDS). A coiled-coil region spans residues 682–745 (SNLAKTKRKH…KGSIKKQRTS (64 aa)).

In terms of assembly, interacts with ASY1.

The protein localises to the chromosome. The protein resides in the nucleus. Its function is as follows. Required for normal meiosis in male and female gametophytes. Acts with ASY1 at the interface between the developing chromosome axes and the recombination machinery to ensure interhomolog recombination. Required for synaptonemal complex formation during meiosis. The protein is Meiosis-specific protein ASY3 of Arabidopsis thaliana (Mouse-ear cress).